The primary structure comprises 278 residues: Shikimate dehydrogenase (NADP(+)) (278 aa).

Residues 19-21 (SFS) and T66 contribute to the shikimate site. Residue K70 is the Proton acceptor of the active site. N91 and D106 together coordinate shikimate. NADP(+) contacts are provided by residues 130–134 (GSGGA) and L222. Y224 lines the shikimate pocket. Residue G245 coordinates NADP(+).

This sequence belongs to the shikimate dehydrogenase family. Homodimer.

It carries out the reaction shikimate + NADP(+) = 3-dehydroshikimate + NADPH + H(+). The protein operates within metabolic intermediate biosynthesis; chorismate biosynthesis; chorismate from D-erythrose 4-phosphate and phosphoenolpyruvate: step 4/7. Its function is as follows. Involved in the biosynthesis of the chorismate, which leads to the biosynthesis of aromatic amino acids. Catalyzes the reversible NADPH linked reduction of 3-dehydroshikimate (DHSA) to yield shikimate (SA). This chain is Shikimate dehydrogenase (NADP(+)), found in Methanococcus maripaludis (strain DSM 14266 / JCM 13030 / NBRC 101832 / S2 / LL).